Reading from the N-terminus, the 306-residue chain is UDP-3-O-acyl-N-acetylglucosamine deacetylase (306 aa).

Zn(2+)-binding residues include His79, His238, and Asp242. His265 serves as the catalytic Proton donor.

This sequence belongs to the LpxC family. The cofactor is Zn(2+).

It catalyses the reaction a UDP-3-O-[(3R)-3-hydroxyacyl]-N-acetyl-alpha-D-glucosamine + H2O = a UDP-3-O-[(3R)-3-hydroxyacyl]-alpha-D-glucosamine + acetate. It participates in glycolipid biosynthesis; lipid IV(A) biosynthesis; lipid IV(A) from (3R)-3-hydroxytetradecanoyl-[acyl-carrier-protein] and UDP-N-acetyl-alpha-D-glucosamine: step 2/6. In terms of biological role, catalyzes the hydrolysis of UDP-3-O-myristoyl-N-acetylglucosamine to form UDP-3-O-myristoylglucosamine and acetate, the committed step in lipid A biosynthesis. The polypeptide is UDP-3-O-acyl-N-acetylglucosamine deacetylase (Shewanella oneidensis (strain ATCC 700550 / JCM 31522 / CIP 106686 / LMG 19005 / NCIMB 14063 / MR-1)).